We begin with the raw amino-acid sequence, 513 residues long: Keratin, type II cuticular Hb2 (513 aa).

The interval 1–120 (MSYHSFQPGS…PTVQRVKRDE (120 aa)) is head. One can recognise an IF rod domain in the interval 120–431 (EKEQIKCLNN…RLLEGEEHRL (312 aa)). The segment at 121-155 (KEQIKCLNNRFASFINKVRFLEQKNKLLETKWNFM) is coil 1A. The interval 156-165 (QQQRCCQTNI) is linker 1. The tract at residues 166–266 (EPIFEGYISA…YEEEICLLQS (101 aa)) is coil 1B. Residues 267 to 283 (QISETSVIVKMDNSREL) form a linker 12 region. Positions 284 to 427 (DVDGIIAEIK…ATYRRLLEGE (144 aa)) are coil 2. Residues 428–513 (EHRLCEGIGP…AGGSSPSHKH (86 aa)) form a tail region.

The protein belongs to the intermediate filament family. In terms of assembly, heterotetramer of two type I and two type II keratins.

In Homo sapiens (Human), this protein is Keratin, type II cuticular Hb2 (KRT82).